The following is a 199-amino-acid chain: MLEVLLVLLGYVLGSVPTGILVGRAYGVDVRKVGSGNIGTANVMRAAGKGAAALTMLGDMLKGVAPVLLARALGAGPWVLAAVALAAVVGHCWPVFLRFRGGKGVATGAGTSIALAPPVGLGMFALWWVVALASRYTSLAAMVVTVVSPFAFLLSGQPLPYVLYTVVGGAAVLWRHRENARALLRGTERKFGGRSGGGG.

The next 4 helical transmembrane spans lie at 2-22 (LEVLLVLLGYVLGSVPTGILV), 77-97 (PWVLAAVALAAVVGHCWPVFL), 113-133 (IALAPPVGLGMFALWWVVALA), and 139-159 (LAAMVVTVVSPFAFLLSGQPL).

It belongs to the PlsY family. Probably interacts with PlsX.

It localises to the cell membrane. The catalysed reaction is an acyl phosphate + sn-glycerol 3-phosphate = a 1-acyl-sn-glycero-3-phosphate + phosphate. It participates in lipid metabolism; phospholipid metabolism. Catalyzes the transfer of an acyl group from acyl-phosphate (acyl-PO(4)) to glycerol-3-phosphate (G3P) to form lysophosphatidic acid (LPA). This enzyme utilizes acyl-phosphate as fatty acyl donor, but not acyl-CoA or acyl-ACP. The chain is Glycerol-3-phosphate acyltransferase from Rubrobacter xylanophilus (strain DSM 9941 / JCM 11954 / NBRC 16129 / PRD-1).